The following is a 509-amino-acid chain: Maturase K (509 aa).

This sequence belongs to the intron maturase 2 family. MatK subfamily.

The protein resides in the plastid. The protein localises to the chloroplast. Its function is as follows. Usually encoded in the trnK tRNA gene intron. Probably assists in splicing its own and other chloroplast group II introns. This chain is Maturase K, found in Ibicella lutea (Yellow unicorn-plant).